The sequence spans 574 residues: Adenine deaminase (574 aa).

It belongs to the metallo-dependent hydrolases superfamily. Adenine deaminase family. It depends on Mn(2+) as a cofactor.

It carries out the reaction adenine + H2O + H(+) = hypoxanthine + NH4(+). This Thermosipho melanesiensis (strain DSM 12029 / CIP 104789 / BI429) protein is Adenine deaminase.